The primary structure comprises 199 residues: Recombination protein RecR (199 aa).

Residues 57–72 form a C4-type zinc finger; the sequence is CQSCRTFTEETYCPIC. Residues 81 to 176 form the Toprim domain; sequence EVICVVETPA…TVSRIAHGVP (96 aa).

This sequence belongs to the RecR family.

Its function is as follows. May play a role in DNA repair. It seems to be involved in an RecBC-independent recombinational process of DNA repair. It may act with RecF and RecO. This chain is Recombination protein RecR, found in Shewanella pealeana (strain ATCC 700345 / ANG-SQ1).